We begin with the raw amino-acid sequence, 459 residues long: Argininosuccinate lyase (459 aa).

This sequence belongs to the lyase 1 family. Argininosuccinate lyase subfamily.

The protein resides in the cytoplasm. It carries out the reaction 2-(N(omega)-L-arginino)succinate = fumarate + L-arginine. It functions in the pathway amino-acid biosynthesis; L-arginine biosynthesis; L-arginine from L-ornithine and carbamoyl phosphate: step 3/3. This is Argininosuccinate lyase from Staphylococcus aureus (strain USA300).